Reading from the N-terminus, the 536-residue chain is Probable pectinesterase/pectinesterase inhibitor 59 (536 aa).

The signal sequence occupies residues 1 to 30 (MNMMMQKLSILFLHLILLVLLCVHPLTTVA). The tract at residues 31 to 183 (DRNSTDWCDK…SHLISNCLAV (153 aa)) is pectinesterase inhibitor 59. N-linked (GlcNAc...) asparagine glycosylation is found at N33, N91, N116, N159, and N195. Residues 221–522 (NLVVAKDGSG…FTVGKFIAGT (302 aa)) form a pectinesterase 59 region. Residues T298 and Q328 each contribute to the substrate site. D351 functions as the Proton donor; for pectinesterase activity in the catalytic mechanism. Cysteines 365 and 385 form a disulfide. The Nucleophile; for pectinesterase activity role is filled by D372. Positions 440 and 442 each coordinate substrate.

It in the N-terminal section; belongs to the PMEI family. This sequence in the C-terminal section; belongs to the pectinesterase family. Expressed in siliques.

The protein localises to the secreted. Its subcellular location is the cell wall. It catalyses the reaction [(1-&gt;4)-alpha-D-galacturonosyl methyl ester](n) + n H2O = [(1-&gt;4)-alpha-D-galacturonosyl](n) + n methanol + n H(+). Its pathway is glycan metabolism; pectin degradation; 2-dehydro-3-deoxy-D-gluconate from pectin: step 1/5. Its function is as follows. Acts in the modification of cell walls via demethylesterification of cell wall pectin. This Arabidopsis thaliana (Mouse-ear cress) protein is Probable pectinesterase/pectinesterase inhibitor 59 (PME59).